We begin with the raw amino-acid sequence, 566 residues long: Protein kintoun (566 aa).

3 disordered regions span residues 183-298, 399-467, and 493-552; these read KYKG…TAPQ, EEEE…AETG, and QLEE…ESRI. Over residues 208–290 the composition is skewed to low complexity; that stretch reads PQQTTGPQQP…HQPTDPQQTT (83 aa). Basic and acidic residues predominate over residues 399–424; sequence EEEERRAEEEESRKGGDEDGELHPDC. The span at 440 to 467 shows a compositional bias: low complexity; the sequence is TPAADTHTPAADTHTPAADTHTPAAETG. Over residues 535 to 550 the composition is skewed to basic and acidic residues; it reads DPAHTDPAHTDPEMES.

It belongs to the PIH1 family. Kintoun subfamily.

It is found in the cytoplasm. It localises to the dynein axonemal particle. Required for cytoplasmic pre-assembly of axonemal dyneins, thereby playing a central role in motility in cilia and flagella. Involved in pre-assembly of dynein arm complexes in the cytoplasm before intraflagellar transport loads them for the ciliary compartment. The sequence is that of Protein kintoun from Danio rerio (Zebrafish).